We begin with the raw amino-acid sequence, 352 residues long: MNQADAWKLRSSRYEAVQFSREINKQLSELRPDNVMGAIYIAKDYAVIAACTLATLCVSWWLYPLAVLLIGAYQRGLTTIAHDAAHRTLAKNTTWNYVLGILFAAYPLFQRHWAYRISHVYLHHPYLGDPEKDPDLKFFMANGVYDVQPPKRYAFNIIWKPIFGGATLAYLKYLWTNRFSITDSEDQSRSSILVDKYGFYLFWIGILAGSYALGLLHIVILFWIVPYLTTFQVLGWFVELAEHSPMCESETKNVYLTRNRKGNFLERAILGQNLDEYHLEHHLSPGIPFWLLHKAQKIRMQDPGYAKVAASWGGLFVKGPQGQPSVITQLKERNRRLYEQSLADAHAKGHVA.

A run of 3 helical transmembrane segments spans residues L53–Y73, L89–F109, and I204–I224.

The protein belongs to the fatty acid desaturase type 1 family.

It is found in the cell inner membrane. The catalysed reaction is dihydrorhizobitoxine + 2 reduced [2Fe-2S]-[ferredoxin] + O2 + 2 H(+) = rhizobitoxine + 2 oxidized [2Fe-2S]-[ferredoxin] + 2 H2O. Functionally, involved in the biosynthesis of the nodulation enhancer compound rhizobitoxine. Catalyzes the final step of the pathway, the introduction of a carbon double bond into the C3 position of dihydrorhizobitoxine to produce rhizobitoxine. The sequence is that of Dihydrorhizobitoxine desaturase from Bradyrhizobium elkanii.